Reading from the N-terminus, the 645-residue chain is Octopamine receptor Oamb (645 aa).

The Extracellular segment spans residues methionine 1–alanine 25. Residue asparagine 2 is glycosylated (N-linked (GlcNAc...) asparagine). A helical transmembrane segment spans residues valine 26 to phenylalanine 46. Residues cysteine 47–asparagine 56 are Cytoplasmic-facing. The helical transmembrane segment at phenylalanine 57 to serine 77 threads the bilayer. Residues alanine 78–arginine 94 lie on the Extracellular side of the membrane. Cysteines 93 and 287 form a disulfide. Residues isoleucine 95–serine 115 traverse the membrane as a helical segment. Residues leucine 116–lysine 138 are Cytoplasmic-facing. A helical transmembrane segment spans residues serine 139–tryptophan 159. The Extracellular portion of the chain corresponds to lysine 160–tyrosine 295. A glycan (N-linked (GlcNAc...) asparagine) is linked at asparagine 174. Residues glutamine 190–glycine 212 are disordered. The helical transmembrane segment at valine 296 to tryptophan 316 threads the bilayer. Topologically, residues arginine 317–threonine 520 are cytoplasmic. 2 disordered regions span residues glycine 358 to glutamate 386 and arginine 479 to glycine 500. Residues serine 369–proline 385 are compositionally biased toward low complexity. A helical transmembrane segment spans residues leucine 521–isoleucine 541. Topologically, residues arginine 542 to proline 551 are extracellular. Residues leucine 552–tyrosine 572 traverse the membrane as a helical segment. At alanine 573–arginine 645 the chain is on the cytoplasmic side. Residues threonine 621–arginine 645 form a disordered region. Positions phenylalanine 629–arginine 645 are enriched in basic and acidic residues.

The protein belongs to the G-protein coupled receptor 1 family. In terms of tissue distribution, highly enriched in mushroom body neuropil and in the ellipsoid body (at protein level). Expressed in oviduct epithelium (at protein level). Expressed in the adult and larval brain, thoracic and abdominal ganglia, terminal cells of the larval tracheal system, muscle, mature eggs and reproductive system.

It localises to the cell membrane. Its function is as follows. Receptor for octopamine (OA) which is a neurotransmitter, neurohormone and neuromodulator in invertebrates. Stimulates intracellular accumulation of cAMP and Ca(2+) following ligand binding. Required for ovulation. Following activation on mature follicle cells by OA, induces activity of the metalloprotease Mmp2 which leads to breakdown of the posterior follicle wall, resulting in ovulation. Ligand binding probably also leads to activation of CamKII which is also required for ovulation. Modulates sleep/wake behavior by acting in neurons of the pars intercerebralis to promote wakefulness. Plays a role in courtship conditioning where the courtship behavior of males rejected by already mated females is inhibited with further females. Required in the mushroom body for appetitive olfactory learning. Specifically conveys the short-term reinforcing effects of sweet taste. In insulin-producing cells of the brain, plays a role in inhibiting transcription of insulin-like peptide Ilp3. Also plays a role in social behavior by modulating male agression. The polypeptide is Octopamine receptor Oamb (Drosophila melanogaster (Fruit fly)).